Reading from the N-terminus, the 559-residue chain is Endoglin (559 aa).

The first 20 residues, 1 to 20 (MKSICCVLVLCLLLCRRSTA), serve as a signal peptide directing secretion. The Extracellular portion of the chain corresponds to 21-473 (SESICELKDV…SCFEFGLSAV (453 aa)). 2 disulfide bridges follow: C25–C201 and C47–C174. N55, N79, N109, N133, N170, N302, and N352 each carry an N-linked (GlcNAc...) asparagine glycan. C381 and C427 are disulfide-bonded. Residues 474–494 (LGIAFGGFLIGVLLTGALWFI) traverse the membrane as a helical segment. The Cytoplasmic portion of the chain corresponds to 495-559 (KIRTGHPVAL…TQSTPTSSMA (65 aa)). The disordered stretch occupies residues 528-559 (RQPVPTHPSPSENSSANASIGSTQSTPTSSMA). Over residues 536 to 546 (SPSENSSANAS) the composition is skewed to low complexity. Residues 547-559 (IGSTQSTPTSSMA) show a composition bias toward polar residues.

In terms of assembly, homodimer; disulfide-linked.

The protein resides in the cell membrane. Its function is as follows. Vascular endothelium glycoprotein that plays an important role in the regulation of angiogenesis. Required for normal structure and integrity of adult vasculature. Important for endothelial cell shape changes in response to blood flow, which drive vascular remodeling and establishment of normal vascular morphology during angiogenesis. In Danio rerio (Zebrafish), this protein is Endoglin.